Reading from the N-terminus, the 287-residue chain is D-alanine--D-alanine ligase (287 aa).

Positions 98–283 (KTKQIAQSVG…FDDVVRITVE (186 aa)) constitute an ATP-grasp domain. 124-169 (PVIIKPVDEGSSKGLFLCNNKEEAEEAVKKLAKPIIEDYIIGEELT) serves as a coordination point for ATP. The Mg(2+) site is built by aspartate 238, glutamate 250, and asparagine 252.

This sequence belongs to the D-alanine--D-alanine ligase family. The cofactor is Mg(2+). Requires Mn(2+) as cofactor.

It localises to the cytoplasm. The enzyme catalyses 2 D-alanine + ATP = D-alanyl-D-alanine + ADP + phosphate + H(+). Its pathway is cell wall biogenesis; peptidoglycan biosynthesis. Cell wall formation. The chain is D-alanine--D-alanine ligase from Fusobacterium nucleatum subsp. nucleatum (strain ATCC 25586 / DSM 15643 / BCRC 10681 / CIP 101130 / JCM 8532 / KCTC 2640 / LMG 13131 / VPI 4355).